We begin with the raw amino-acid sequence, 448 residues long: 3-phosphoshikimate 1-carboxyvinyltransferase (448 aa).

3-phosphoshikimate is bound by residues Lys38, Ser39, and Arg43. Residue Lys38 participates in phosphoenolpyruvate binding. Gly111 and Arg140 together coordinate phosphoenolpyruvate. Positions 185, 187, 335, and 362 each coordinate 3-phosphoshikimate. Gln187 provides a ligand contact to phosphoenolpyruvate. The active-site Proton acceptor is the Asp335. Residues Arg366 and Arg408 each contribute to the phosphoenolpyruvate site.

Belongs to the EPSP synthase family. In terms of assembly, monomer.

It localises to the cytoplasm. The catalysed reaction is 3-phosphoshikimate + phosphoenolpyruvate = 5-O-(1-carboxyvinyl)-3-phosphoshikimate + phosphate. It participates in metabolic intermediate biosynthesis; chorismate biosynthesis; chorismate from D-erythrose 4-phosphate and phosphoenolpyruvate: step 6/7. Catalyzes the transfer of the enolpyruvyl moiety of phosphoenolpyruvate (PEP) to the 5-hydroxyl of shikimate-3-phosphate (S3P) to produce enolpyruvyl shikimate-3-phosphate and inorganic phosphate. The polypeptide is 3-phosphoshikimate 1-carboxyvinyltransferase (Synechococcus elongatus (strain ATCC 33912 / PCC 7942 / FACHB-805) (Anacystis nidulans R2)).